Consider the following 1214-residue polypeptide: Lysine-specific demethylase 3A (1214 aa).

Phosphoserine is present on residues Ser150 and Ser209. Over residues 194 to 211 the composition is skewed to polar residues; the sequence is TPSSNRQQNTPQAANSPP. Disordered regions lie at residues 194 to 215, 271 to 293, and 310 to 398; these read TPSSNRQQNTPQAANSPPNIGA, PKGSCIQPKTNTDQESRLESTPQ, and KAEL…KSVL. Ser330 carries the phosphoserine modification. Over residues 361–370 the composition is skewed to polar residues; it reads LGSQSQNLKE. Residues 371 to 380 show a composition bias toward basic and acidic residues; that stretch reads TSVKVDHDSC. The segment covering 381 to 391 has biased composition (polar residues); it reads CTRSSNKTQTP. Residues 546–571 form a C6-type zinc finger; sequence CDVCDTTIFNLHWVCPRCGFGVCVDC. Residues 769-773 carry the LXXLL motif motif; that stretch reads LRNLL. Lys779 carries the N6-acetyllysine modification. A JmjC domain is found at 944-1167; sequence MPSRFDDLMA…HCFWLTQEFR (224 aa). Fe cation is bound by residues His1006, Asp1008, and His1135.

The protein belongs to the JHDM2 histone demethylase family. As to quaternary structure, interacts with VRK1. Fe(2+) is required as a cofactor. In terms of tissue distribution, testis specific. Expressed only in male germ cells.

Its subcellular location is the cytoplasm. It localises to the nucleus. It catalyses the reaction N(6),N(6)-dimethyl-L-lysyl(9)-[histone H3] + 2 2-oxoglutarate + 2 O2 = L-lysyl(9)-[histone H3] + 2 formaldehyde + 2 succinate + 2 CO2. Histone demethylase that specifically demethylates 'Lys-9' of histone H3, thereby playing a central role in histone code. Preferentially demethylates mono- and dimethylated H3 'Lys-9' residue, with a preference for dimethylated residue, while it has weak or no activity on trimethylated H3 'Lys-9'. Demethylation of Lys residue generates formaldehyde and succinate. Involved in hormone-dependent transcriptional activation, by participating in recruitment to androgen-receptor target genes, resulting in H3 'Lys-9' demethylation and transcriptional activation. Involved in spermatogenesis by regulating expression of target genes such as PRM1 and TNP1 which are required for packaging and condensation of sperm chromatin. Directly regulates expression of PPARA and UCP1 and is involved in obesity resistance. This is Lysine-specific demethylase 3A (Kdm3a) from Rattus norvegicus (Rat).